We begin with the raw amino-acid sequence, 368 residues long: Histidinol-phosphate aminotransferase (368 aa).

Position 223 is an N6-(pyridoxal phosphate)lysine (Lys223).

Belongs to the class-II pyridoxal-phosphate-dependent aminotransferase family. Histidinol-phosphate aminotransferase subfamily. In terms of assembly, homodimer. It depends on pyridoxal 5'-phosphate as a cofactor.

It carries out the reaction L-histidinol phosphate + 2-oxoglutarate = 3-(imidazol-4-yl)-2-oxopropyl phosphate + L-glutamate. The protein operates within amino-acid biosynthesis; L-histidine biosynthesis; L-histidine from 5-phospho-alpha-D-ribose 1-diphosphate: step 7/9. This is Histidinol-phosphate aminotransferase from Rhodospirillum rubrum (strain ATCC 11170 / ATH 1.1.1 / DSM 467 / LMG 4362 / NCIMB 8255 / S1).